Here is a 158-residue protein sequence, read N- to C-terminus: MADVVEVLVPGGKANPGPPLGPALGPLGINIKKVVDEINNKTKDYNGMTVPVKVIVDASRNFTVEVGTPPTSALVLSELKLEKGSGTPNTNFIGSLTIEQAIKVAQMKRDAMLSYTLKNAVKEVAGTCVSLGVMIEGKKPKEFIAEVNAGKYDDKLSE.

Belongs to the universal ribosomal protein uL11 family. As to quaternary structure, part of the ribosomal stalk of the 50S ribosomal subunit. Interacts with L10 and the large rRNA to form the base of the stalk. L10 forms an elongated spine to which L12 dimers bind in a sequential fashion forming a multimeric L10(L12)X complex.

In terms of biological role, forms part of the ribosomal stalk which helps the ribosome interact with GTP-bound translation factors. The chain is Large ribosomal subunit protein uL11 from Methanocella arvoryzae (strain DSM 22066 / NBRC 105507 / MRE50).